The sequence spans 229 residues: Uracil-DNA glycosylase (229 aa).

Residue aspartate 64 is the Proton acceptor of the active site.

This sequence belongs to the uracil-DNA glycosylase (UDG) superfamily. UNG family.

Its subcellular location is the cytoplasm. It carries out the reaction Hydrolyzes single-stranded DNA or mismatched double-stranded DNA and polynucleotides, releasing free uracil.. In terms of biological role, excises uracil residues from the DNA which can arise as a result of misincorporation of dUMP residues by DNA polymerase or due to deamination of cytosine. In Salmonella agona (strain SL483), this protein is Uracil-DNA glycosylase.